A 444-amino-acid polypeptide reads, in one-letter code: Orexin receptor type 2 (444 aa).

Positions 1-10 (MSGTKLEDSP) are enriched in basic and acidic residues. The tract at residues 1 to 20 (MSGTKLEDSPPCRNWSSASE) is disordered. Topologically, residues 1-54 (MSGTKLEDSPPCRNWSSASELNETQEPFLNPTDYDDEEFLRYLWREYLHPKEYE) are extracellular. N-linked (GlcNAc...) asparagine glycans are attached at residues asparagine 14 and asparagine 22. Residues 33–49 (DYDDEEFLRYLWREYLH) form a required for response to orexin-A region. Residues 55-75 (WVLIAGYIIVFVVALIGNVLV) traverse the membrane as a helical segment. Residues 76-88 (CVAVWKNHHMRTV) are Cytoplasmic-facing. A helical transmembrane segment spans residues 89 to 110 (TNYFIVNLSLADVLVTITCLPA). Topologically, residues 111 to 127 (TLVVDITETWFFGQSLC) are extracellular. An intrachain disulfide couples cysteine 127 to cysteine 210. Residues 128 to 150 (KVIPYLQTVSVSVSVLTLSCIAL) traverse the membrane as a helical segment. Topologically, residues 151-170 (DRWYAICHPLMFKSTAKRAR) are cytoplasmic. The helical transmembrane segment at 171-191 (NSIVIIWIVSCIIMIPQAIVM) threads the bilayer. Topologically, residues 192–222 (ECSTVFPGLANKTTLFTVCDERWGGEIYPKM) are extracellular. The N-linked (GlcNAc...) asparagine glycan is linked to asparagine 202. A helical transmembrane segment spans residues 223–243 (YHICFFLVTYMAPLCLMVLAY). At 244–304 (LQIFRKLWCR…QIRARRKTAR (61 aa)) the chain is on the cytoplasmic side. A helical membrane pass occupies residues 305–326 (MLMIVLLVFAICYLPISILNVL). Residue asparagine 324 coordinates suvorexant. At 327–342 (KRVFGMFAHTEDRETV) the chain is on the extracellular side. Residues 343–366 (YAWFTFSHWLVYANSAANPIIYNF) form a helical membrane-spanning segment. Residues 367-444 (LSGKFREEFK…ANGAGPLQNW (78 aa)) lie on the Cytoplasmic side of the membrane.

Belongs to the G-protein coupled receptor 1 family.

The protein resides in the cell membrane. Its function is as follows. Nonselective, high-affinity receptor for both orexin-A and orexin-B neuropeptides. Triggers an increase in cytoplasmic Ca(2+) levels in response to orexin-A binding. The sequence is that of Orexin receptor type 2 (HCRTR2) from Homo sapiens (Human).